The sequence spans 561 residues: Dihydroxy-acid dehydratase (561 aa).

Position 50 (Cys50) interacts with [2Fe-2S] cluster. Asp82 lines the Mg(2+) pocket. Cys123 lines the [2Fe-2S] cluster pocket. 2 residues coordinate Mg(2+): Asp124 and Lys125. Position 125 is an N6-carboxylysine (Lys125). Cys195 provides a ligand contact to [2Fe-2S] cluster. Mg(2+) is bound at residue Glu447. The Proton acceptor role is filled by Ser473.

This sequence belongs to the IlvD/Edd family. Homodimer. [2Fe-2S] cluster serves as cofactor. Requires Mg(2+) as cofactor.

The enzyme catalyses (2R)-2,3-dihydroxy-3-methylbutanoate = 3-methyl-2-oxobutanoate + H2O. The catalysed reaction is (2R,3R)-2,3-dihydroxy-3-methylpentanoate = (S)-3-methyl-2-oxopentanoate + H2O. Its pathway is amino-acid biosynthesis; L-isoleucine biosynthesis; L-isoleucine from 2-oxobutanoate: step 3/4. It functions in the pathway amino-acid biosynthesis; L-valine biosynthesis; L-valine from pyruvate: step 3/4. Functions in the biosynthesis of branched-chain amino acids. Catalyzes the dehydration of (2R,3R)-2,3-dihydroxy-3-methylpentanoate (2,3-dihydroxy-3-methylvalerate) into 2-oxo-3-methylpentanoate (2-oxo-3-methylvalerate) and of (2R)-2,3-dihydroxy-3-methylbutanoate (2,3-dihydroxyisovalerate) into 2-oxo-3-methylbutanoate (2-oxoisovalerate), the penultimate precursor to L-isoleucine and L-valine, respectively. This chain is Dihydroxy-acid dehydratase, found in Rippkaea orientalis (strain PCC 8801 / RF-1) (Cyanothece sp. (strain PCC 8801)).